The chain runs to 786 residues: Endonuclease MutS2 (786 aa).

335-342 (GPNTGGKT) lines the ATP pocket. The region spanning 711-786 (LDLRGERFEN…GLGVTVVELK (76 aa)) is the Smr domain.

Belongs to the DNA mismatch repair MutS family. MutS2 subfamily. As to quaternary structure, homodimer. Binds to stalled ribosomes, contacting rRNA.

Its function is as follows. Endonuclease that is involved in the suppression of homologous recombination and thus may have a key role in the control of bacterial genetic diversity. Acts as a ribosome collision sensor, splitting the ribosome into its 2 subunits. Detects stalled/collided 70S ribosomes which it binds and splits by an ATP-hydrolysis driven conformational change. Acts upstream of the ribosome quality control system (RQC), a ribosome-associated complex that mediates the extraction of incompletely synthesized nascent chains from stalled ribosomes and their subsequent degradation. Probably generates substrates for RQC. The protein is Endonuclease MutS2 of Bacillus cereus (strain AH820).